Consider the following 524-residue polypeptide: Rho guanine nucleotide exchange factor 3 (524 aa).

The segment at 75–98 is disordered; sequence SDSRPDLFSPRPWSRNTPAANTKR. Residues 121–303 form the DH domain; it reads IKRQEAIFEL…IQGIVAEINI (183 aa). The 159-residue stretch at 290–448 folds into the PH domain; sequence AINIIQGIVA…QWLNCIRQAK (159 aa).

Its subcellular location is the cytoplasm. Functionally, acts as a guanine nucleotide exchange factor (GEF) for RhoA and RhoB GTPases. This is Rho guanine nucleotide exchange factor 3 (Arhgef3) from Gallus gallus (Chicken).